The chain runs to 291 residues: Protein/nucleic acid deglycase HchA (291 aa).

A compositionally biased stretch (basic and acidic residues) spans 1–18 (MSNERDTSRTPTPDHAEH). Positions 1–20 (MSNERDTSRTPTPDHAEHNA) are disordered. Catalysis depends on cysteine 188, which acts as the Nucleophile.

It belongs to the peptidase C56 family. HchA subfamily.

The protein resides in the cytoplasm. The catalysed reaction is N(omega)-(1-hydroxy-2-oxopropyl)-L-arginyl-[protein] + H2O = lactate + L-arginyl-[protein] + H(+). It carries out the reaction N(6)-(1-hydroxy-2-oxopropyl)-L-lysyl-[protein] + H2O = lactate + L-lysyl-[protein] + H(+). It catalyses the reaction S-(1-hydroxy-2-oxopropyl)-L-cysteinyl-[protein] + H2O = lactate + L-cysteinyl-[protein] + H(+). The enzyme catalyses N(omega)-(1-hydroxy-2-oxoethyl)-L-arginyl-[protein] + H2O = L-arginyl-[protein] + glycolate + H(+). The catalysed reaction is N(6)-(1-hydroxy-2-oxoethyl)-L-lysyl-[protein] + H2O = glycolate + L-lysyl-[protein] + H(+). It carries out the reaction S-(1-hydroxy-2-oxoethyl)-L-cysteinyl-[protein] + H2O = glycolate + L-cysteinyl-[protein] + H(+). It catalyses the reaction N(2)-(1-hydroxy-2-oxopropyl)-dGTP + H2O = lactate + dGTP + H(+). The enzyme catalyses N(2)-(1-hydroxy-2-oxopropyl)-GTP + H2O = lactate + GTP + H(+). The catalysed reaction is N(2)-(1-hydroxy-2-oxopropyl)-GDP + H2O = lactate + GDP + H(+). It carries out the reaction N(2)-(1-hydroxy-2-oxopropyl)-GMP + H2O = lactate + GMP + H(+). It catalyses the reaction N(2)-(1-hydroxy-2-oxoethyl)-dGTP + H2O = dGTP + glycolate + H(+). The enzyme catalyses N(2)-(1-hydroxy-2-oxoethyl)-GTP + H2O = glycolate + GTP + H(+). The catalysed reaction is N(2)-(1-hydroxy-2-oxoethyl)-GDP + H2O = glycolate + GDP + H(+). It carries out the reaction N(2)-(1-hydroxy-2-oxoethyl)-GMP + H2O = glycolate + GMP + H(+). It catalyses the reaction an N(2)-(1-hydroxy-2-oxopropyl)-guanosine in RNA + H2O = a guanosine in RNA + lactate + H(+). The enzyme catalyses an N(2)-(1-hydroxy-2-oxopropyl)-2'-deoxyguanosine in DNA + H2O = a 2'-deoxyguanosine in DNA + lactate + H(+). The catalysed reaction is an N(2)-(1-hydroxy-2-oxoethyl)-guanosine in RNA + H2O = a guanosine in RNA + glycolate + H(+). It carries out the reaction an N(2)-(1-hydroxy-2-oxoethyl)-2'-deoxyguanosine in DNA + H2O = a 2'-deoxyguanosine in DNA + glycolate + H(+). In terms of biological role, protein and nucleotide deglycase that catalyzes the deglycation of the Maillard adducts formed between amino groups of proteins or nucleotides and reactive carbonyl groups of glyoxals. Thus, functions as a protein deglycase that repairs methylglyoxal- and glyoxal-glycated proteins, and releases repaired proteins and lactate or glycolate, respectively. Deglycates cysteine, arginine and lysine residues in proteins, and thus reactivates these proteins by reversing glycation by glyoxals. Acts on early glycation intermediates (hemithioacetals and aminocarbinols), preventing the formation of Schiff bases and advanced glycation endproducts (AGE). Also functions as a nucleotide deglycase able to repair glycated guanine in the free nucleotide pool (GTP, GDP, GMP, dGTP) and in DNA and RNA. Is thus involved in a major nucleotide repair system named guanine glycation repair (GG repair), dedicated to reversing methylglyoxal and glyoxal damage via nucleotide sanitization and direct nucleic acid repair. Plays an important role in protecting cells from carbonyl stress. The polypeptide is Protein/nucleic acid deglycase HchA (Pseudomonas aeruginosa (strain LESB58)).